The primary structure comprises 468 residues: MTGKTLYDKIWDAHLAHEAEDGTSLLYIDRHLVHEVTSPQAFEGLRMAGRSVHAPDKTIAVPDHNVPTTEGRDDPKNMTEDSAIQVAALDKNAKDFGIHYYPVSDVRQGIVHIVGPEQGWTLPGMTVVCGDSHTATHGAFGALAHGIGTSEVEHVLATQTLIQKKSKNMKVEITGKLAPGVTAKDITLTVIGRTGTAGGTGYVIEYCGEAIRDLSMEGRMTVCNMAIEGGARAGIIAPDEKTFEYCMGRPHAPKGAQWEAALAWWKTLYSDDDAHWDEVVTIRGEDIAPVVTWGTSPEDVLPITAEVPAADSFEGGKVGAAQRSLDYMGLTAGTPLDQIEIDTVFIGSCTNGRIEDLRAAASILKGKKVKDGLRAMIVPGSGLVRAQAEEEGLADIFKDAGFEWRLAGCSMCLAMNPDQLSPGERCAATSNRNFEGRQGRGGRTHLMSPAMAAAAAITGRLTDVRELM.

[4Fe-4S] cluster is bound by residues C349, C409, and C412.

Belongs to the aconitase/IPM isomerase family. LeuC type 1 subfamily. Heterodimer of LeuC and LeuD. [4Fe-4S] cluster serves as cofactor.

The enzyme catalyses (2R,3S)-3-isopropylmalate = (2S)-2-isopropylmalate. The protein operates within amino-acid biosynthesis; L-leucine biosynthesis; L-leucine from 3-methyl-2-oxobutanoate: step 2/4. Its function is as follows. Catalyzes the isomerization between 2-isopropylmalate and 3-isopropylmalate, via the formation of 2-isopropylmaleate. The protein is 3-isopropylmalate dehydratase large subunit of Jannaschia sp. (strain CCS1).